The chain runs to 1300 residues: MVLLRSGLGTRPGEEDCDGGPSTRTRGHGPLGPNIKSAAGIGGKFPPSPQGRKRKKGPKKSGGKKKKRKVTGEGPGGGEGPGGGEGPGGGEGPGGGEGPGGGEGPGGGEVPGGGEVPGGGEGPGGGEGPGGGEGPGGGEGPGGNSRKRKRGDGSKKHGGKKKKKTTVTGEGGSGPEGPERDDPDGPGSQEGPKREEGPLGPDGPEGPEGPEGEGPEGLEGPKGEGPEGPEGPEGDSPDGPGAQEGPEGLEGPEGDEGPEGPEGPEGEGPEGPEGPKGDSPDGPGAQEGPEGPGGPDEDEGPEEPEGPEGEGPEGPEGEGPEGLEGPEGEGPEGPEGPEGDSPDGPDAQEGPEGPGGPDEDEGPEEPEGPEGEGPEGPEGPEGEGPEGPEGPEGEGPEGLEGPEGEGPEGPEGPEGDSPDGPGAQEGPEGPEGPEGEGPEGLEGPEGEGPEGPEGPEGEGPEGPEGPEGEGPERPEGPEGEGPEGPEGPEGEGPEGPEGPERDSPDGPGAQEGPEGPEGPEGEGPEGLEGPEGEGPEGPEGPEGEGPEGPEGPEGEGPEGPEGPERDSPDGPGAQEGPEGPEGPEEDEGPEGPEGPEGEGPEGPEGEGPEGLEGPEGDEGPEEPEGPEGDSPDGPGAQEVPEGPKGPEGECQSGPSSCEGQQVPKGPDGPEEGSSGPGSSEGEGPSGPGSSEGQQVPKGAEGSEGEGPCRPGGPDEDGDPEGPDGTEGEGPCGPGGPDEDGDPEGPDGTEGEGPCGPGGPDEDGDPEESEGTEDDIKVGLTELLGSMKLDSSDSDSDNSSDSANRRALEGVCGSHSSSKDSDDEEEEEEEEEEEEEEEEDDEEEEEDDEEEEEDDEEEEEDDEEEEEDDEEEEEDDEEEEEEEVIIITSSGEDGCGSSDVVCVGEEKGEGEKGKGREEDGGEGGEGGEGGEGGEGGEGGEGGEGGEGGEGGEGGEGGEGGEGGEGGEGGEGGEGGEGGEGGEGGEGGEGGEGGEGGEGGEGGEGGEGGEGGEGGERGKGGEGGEGGEGGEGGEGSEEDKKPFPCPRSPGVSGFYDLTWSSSDRSTEGSRGSPGPDDLDGRPGSQGPPTLSPQGFPGSGYGSNYDDDREPPVLSPQCGGPSGNEGDESDPDSSREPPDLSPQNPPEGDNGNESDSDPSYQPLGGSSSSSEDDDPGEGTSQGPPKRPPKHHPQTKRAQGKTLGLDPLYDPRQKAATFSLHLGCPTKDPLVRLSRMIRTLHPEGPHSSIFFTGGQYVVVFYVTSYFEAKKLKDFIIREQNRNPLQGRVNVSLARHYPPFPFPHE.

The interval 1–1205 (MVLLRSGLGT…GKTLGLDPLY (1205 aa)) is disordered. A compositionally biased stretch (basic residues) spans 51–69 (GRKRKKGPKKSGGKKKKRK). A compositionally biased stretch (gly residues) spans 73–143 (EGPGGGEGPG…GPGGGEGPGG (71 aa)). A compositionally biased stretch (basic residues) spans 145–165 (SRKRKRGDGSKKHGGKKKKKT). A compositionally biased stretch (low complexity) spans 237–246 (PDGPGAQEGP). Over residues 250–270 (EGPEGDEGPEGPEGPEGEGPE) the composition is skewed to acidic residues. Positions 280–289 (PDGPGAQEGP) are enriched in low complexity. 2 stretches are compositionally biased toward acidic residues: residues 295 to 343 (PDED…DSPD) and 357 to 417 (PDED…EGDS). A compositionally biased stretch (low complexity) spans 418–427 (PDGPGAQEGP). Acidic residues-rich tracts occupy residues 431-469 (EGPEGEGPEGLEGPEGEGPEGPEGPEGEGPEGPEGPEGE), 477-494 (PEGEGPEGPEGPEGEGPE), 517-558 (EGPE…EGPE), and 581-630 (EGPE…EGDS). A compositionally biased stretch (gly residues) spans 674–686 (SGPGSSEGEGPSG). Composition is skewed to acidic residues over residues 713–726 (PDEDGDPEGPDGTE), 736–749 (PDEDGDPEGPDGTE), 759–772 (PDEDGDPEESEGTE), and 820–883 (SDDE…EEEV). Residues 903–917 (GEEKGEGEKGKGREE) show a composition bias toward basic and acidic residues. 2 stretches are compositionally biased toward gly residues: residues 922–1010 (GGEG…GEGG) and 1021–1031 (GGEGGEGGEGG). Residues 1183 to 1195 (RPPKHHPQTKRAQ) are compositionally biased toward basic residues.

This is an uncharacterized protein from Connochaetes taurinus (Blue wildebeest).